The primary structure comprises 361 residues: Ankyrin repeat domain-containing protein 16 (361 aa).

9 ANK repeats span residues 36–66 (AGDT…DIEA), 70–99 (DYKR…AVDC), 103–132 (ADWT…NPLL), 136–165 (DGWN…GAWK), 170–200 (IRRT…EPDY), 204–234 (CGVT…CLSA), 238–268 (LGAQ…DVDV), 273–302 (THLT…DINS), and 306–335 (KNRS…KDSE).

In terms of assembly, interacts with AARS; the interaction is direct.

The protein resides in the cytoplasm. The protein localises to the nucleus. In terms of biological role, required to prevent the misactivation of serine (Ser) with tRNA(Ala) by promoting the hydrolysis of Ser-mischarged tRNA(Ala), thereby playing a role in translational fidelity. Binds directly to the catalytic domain of AARS/AlaRS and captures Ser that is misactivated by AARS/AlaRS, preventing the charging of Ser adenylates to tRNA(Ala) and precluding Ser misincorporation in nascent peptides. In Homo sapiens (Human), this protein is Ankyrin repeat domain-containing protein 16.